A 600-amino-acid polypeptide reads, in one-letter code: Chaperonin 60 subunit beta 1, chloroplastic (600 aa).

Positions 1 to 12 (MASTFTATSSIG) are enriched in polar residues. A disordered region spans residues 1–23 (MASTFTATSSIGSMVAPNGHKSD). A chloroplast-targeting transit peptide spans 1–54 (MASTFTATSSIGSMVAPNGHKSDKKLISKLSSSSFGRRQSVCPRPRRSSSAIVC). Phosphoserine occurs at positions 101 and 478.

The protein belongs to the chaperonin (HSP60) family. In terms of assembly, part of the Cpn60 complex composed of 7 alpha and 7 beta subunits. Can also form a complex composed of 14 beta subunits only. Both complexes show ATPase activity. The Cpn60 complex interacts with the Cpn10 complex. Interacts with RAB during heat stress. In terms of tissue distribution, expressed in leaves, stems, petioles and flowers.

The protein resides in the plastid. The protein localises to the chloroplast stroma. In terms of biological role, binds RuBisCO small and large subunits and is implicated in the assembly of the enzyme oligomer. Involved in protein assisted folding. Required for proper plastid division. This chain is Chaperonin 60 subunit beta 1, chloroplastic (CPN60B1), found in Arabidopsis thaliana (Mouse-ear cress).